We begin with the raw amino-acid sequence, 123 residues long: Thioredoxin domain-containing protein 17 (123 aa).

A Thioredoxin domain is found at 41-123; sequence SWCPDCVKAE…DLVRMMFTED (83 aa). Residues cysteine 43 and cysteine 46 each act as nucleophile in the active site. A disulfide bridge links cysteine 43 with cysteine 46.

This sequence belongs to the thioredoxin family.

The protein localises to the cytoplasm. In terms of biological role, disulfide reductase. May participate in various redox reactions through the reversible oxidation of its active center dithiol to a disulfide and catalyze dithiol-disulfide exchange reactions. Has peroxidase activity and may contribute to the elimination of cellular hydrogen peroxide. The chain is Thioredoxin domain-containing protein 17 (txndc17) from Danio rerio (Zebrafish).